Reading from the N-terminus, the 88-residue chain is MVKLRLQRTGTKHDPHYRIVAADGRAPRDGKFVDIVGHYHPAQIKEQTTFHKEKILTWLKNGARPTETVLNLFKSAGIWAEYKTALKK.

This sequence belongs to the bacterial ribosomal protein bS16 family.

In Leptospira borgpetersenii serovar Hardjo-bovis (strain L550), this protein is Small ribosomal subunit protein bS16.